The sequence spans 203 residues: bMERB domain-containing protein 1 (203 aa).

The bMERB domain occupies 3–149 (LKQSLSVHLE…EQEEDKEMAD (147 aa)). Positions 161-184 (VTKTSASSRAEKKAEPPPSKPTVA) are disordered.

The protein is bMERB domain-containing protein 1 (Bmerb1) of Mus musculus (Mouse).